A 149-amino-acid chain; its full sequence is Calmodulin (149 aa).

A2 is modified (N-acetylalanine). 4 consecutive EF-hand domains span residues 8–43 (EQIAEFKEAFSLFDKDGDGCITTKELGTVMRSLGQN), 44–79 (PTEAELQDMINEVDADGNGTIDFPELLNLMARKMKD), 81–116 (DSEEELKEAFRVFDKDQNGFISAAELRHVMTNLGEK), and 117–149 (LTDEEVDEMIREADVDGDGQINYEEFVKVMMAK). The Ca(2+) site is built by D21, D23, D25, C27, E32, D57, D59, N61, T63, E68, D94, D96, N98, and E105. The residue at position 116 (K116) is an N6,N6,N6-trimethyllysine. Ca(2+) is bound by residues D130, D132, D134, Q136, and E141.

It belongs to the calmodulin family.

Calmodulin mediates the control of a large number of enzymes, ion channels and other proteins by Ca(2+). Among the enzymes to be stimulated by the calmodulin-Ca(2+) complex are a number of protein kinases and phosphatases. This is Calmodulin (CALM1) from Zea mays (Maize).